A 366-amino-acid chain; its full sequence is MKAIVVKPPKPGVEVRDLSQVIRHGSGTVKVRILENGICGSDREIVKGELTTARPPEGRDWLVLGHEALGIVEDSSDPRFKPGDLVMPINRRSYHGKCLNCLVGRPDFCEANEFVEAGMVGMDGFMVEYWYDDPKYLVKVPKDIADIAIVAQPLSDLEKSVEEILNVQRRFIWTCDDGTYNCRRSIVFGTGSTGILISLLLRTVGFEVYVANRRDPLESEAKITEEAGIIYYNYSKDGLDKLKSMGFDLVVDTTGASASLIGHEVEMLKPNGILGLFGFPSEGELTLRYDVIQRFIYKSNAIVGLINGQKPHFQQALAHLAQWKVVWPTVAKSLITRVVDVNNDKELLQVLNHKERGEIKVKIKWS.

Zn(2+) is bound at residue cysteine 39. Position 41 (serine 41) interacts with substrate. Residues histidine 66 and glutamate 67 each coordinate Zn(2+). Substrate is bound by residues asparagine 90, glutamate 116, glutamine 152, and aspartate 156. Glutamine 152 is a binding site for Zn(2+). Residues 212 to 214 (NRR), 277 to 279 (FGF), 305 to 307 (LIN), and lysine 354 contribute to the NADP(+) site. A substrate-binding site is contributed by asparagine 307.

This sequence belongs to the zinc-containing alcohol dehydrogenase family. Glucose 1-dehydrogenase subfamily. Zn(2+) serves as cofactor.

It catalyses the reaction D-glucose + NAD(+) = D-glucono-1,5-lactone + NADH + H(+). The catalysed reaction is D-glucose + NADP(+) = D-glucono-1,5-lactone + NADPH + H(+). Catalyzes the NAD(P)(+)-dependent oxidation of D-glucose to D-gluconate via gluconolactone. Can utilize both NAD(+) and NADP(+) as electron acceptor. Is involved in the degradation of glucose through a non-phosphorylative variant of the Entner-Doudoroff pathway. This chain is Glucose 1-dehydrogenase 2, found in Caldivirga maquilingensis (strain ATCC 700844 / DSM 13496 / JCM 10307 / IC-167).